The primary structure comprises 121 residues: Small ribosomal subunit protein uS13 (121 aa).

Residues 96–121 (PVRGQNTKNNARTRKGKAVAIAGKKK) are disordered. Positions 106–121 (ARTRKGKAVAIAGKKK) are enriched in basic residues.

Belongs to the universal ribosomal protein uS13 family. Part of the 30S ribosomal subunit. Forms a loose heterodimer with protein S19. Forms two bridges to the 50S subunit in the 70S ribosome.

In terms of biological role, located at the top of the head of the 30S subunit, it contacts several helices of the 16S rRNA. In the 70S ribosome it contacts the 23S rRNA (bridge B1a) and protein L5 of the 50S subunit (bridge B1b), connecting the 2 subunits; these bridges are implicated in subunit movement. Contacts the tRNAs in the A and P-sites. In Streptococcus suis (strain 05ZYH33), this protein is Small ribosomal subunit protein uS13.